Here is a 176-residue protein sequence, read N- to C-terminus: ATP-dependent protease subunit HslV (176 aa).

T2 is a catalytic residue. Residues A157, C160, and T163 each coordinate Na(+).

The protein belongs to the peptidase T1B family. HslV subfamily. A double ring-shaped homohexamer of HslV is capped on each side by a ring-shaped HslU homohexamer. The assembly of the HslU/HslV complex is dependent on binding of ATP.

Its subcellular location is the cytoplasm. The catalysed reaction is ATP-dependent cleavage of peptide bonds with broad specificity.. Allosterically activated by HslU binding. Its function is as follows. Protease subunit of a proteasome-like degradation complex believed to be a general protein degrading machinery. The polypeptide is ATP-dependent protease subunit HslV (Buchnera aphidicola subsp. Schizaphis graminum (strain Sg)).